Consider the following 648-residue polypeptide: Biosynthetic arginine decarboxylase (648 aa).

Residue Lys109 is modified to N6-(pyridoxal phosphate)lysine. 291-301 (LDVGGGLGVDY) lines the substrate pocket.

The protein belongs to the Orn/Lys/Arg decarboxylase class-II family. SpeA subfamily. Mg(2+) serves as cofactor. The cofactor is pyridoxal 5'-phosphate.

The enzyme catalyses L-arginine + H(+) = agmatine + CO2. Its function is as follows. Catalyzes the biosynthesis of agmatine from arginine. This Prochlorococcus marinus (strain MIT 9313) protein is Biosynthetic arginine decarboxylase.